Here is a 526-residue protein sequence, read N- to C-terminus: Putative ankyrin repeat protein R840 (526 aa).

ANK repeat units lie at residues 78 to 107 (TLNECLFISCKRGRNDFVKYFVSKGANIRS), 108 to 137 (RDNFAIKLACEHGHIEVVKYLIDNGVDIRS), 139 to 167 (KNYAVRIACNNGHIDIVKLLISKGANIRD), 169 to 197 (DNCAIKWASENGHIEIVKILVSQGYDSTS), 198 to 227 (NFNEPVILAVKNGHLEVVKYLVSQSDRCRN), 229 to 255 (SAIISAAENGHIEIVKFLASRGSNIRI), 256 to 285 (DDDYTIRIASGNGHLEVVKFLVSKGCNIRS), 286 to 315 (EIDHAVQWASTNGHLEVVEYLVSQGADIKS), 317 to 345 (YDRSVRCASQNGHIEVVKYLVSQGANIRN), 346 to 375 (INDYAVRYASENGHIEVVEYLVSQGANIRV), 376 to 405 (DNDSPLLRACLKGHIKVVKFLVSSGADIRV), 406 to 435 (NNYQPLLIAAGNGHLEILKYLVSQGVNVSI), 437 to 467 (NVPLVGIACIDGYGYFEIVKYLVSIGADINL), 468 to 497 (ADDMAIRLASEYGHLDIVKYLVENGANVRA), and 499 to 526 (NDYAIKQAHRKGHQEVVNYLLSKGAILS).

The polypeptide is Putative ankyrin repeat protein R840 (Acanthamoeba polyphaga (Amoeba)).